The chain runs to 479 residues: Sulfate adenylyltransferase subunit 1 (479 aa).

The tr-type G domain occupies 25–239; the sequence is KSLLRFLTCG…EVLETVDIQR (215 aa). Positions 34-41 are G1; it reads GSVDDGKS. 34 to 41 contributes to the GTP binding site; that stretch reads GSVDDGKS. Residues 92 to 96 are G2; that stretch reads GITID. Residues 113–116 are G3; that stretch reads DTPG. Residues 113-117 and 168-171 each bind GTP; these read DTPGH and NKMD. Residues 168–171 form a G4 region; it reads NKMD. The tract at residues 206 to 208 is G5; sequence SAL.

It belongs to the TRAFAC class translation factor GTPase superfamily. Classic translation factor GTPase family. CysN/NodQ subfamily. In terms of assembly, heterodimer composed of CysD, the smaller subunit, and CysN.

It carries out the reaction sulfate + ATP + H(+) = adenosine 5'-phosphosulfate + diphosphate. Its pathway is sulfur metabolism; hydrogen sulfide biosynthesis; sulfite from sulfate: step 1/3. With CysD forms the ATP sulfurylase (ATPS) that catalyzes the adenylation of sulfate producing adenosine 5'-phosphosulfate (APS) and diphosphate, the first enzymatic step in sulfur assimilation pathway. APS synthesis involves the formation of a high-energy phosphoric-sulfuric acid anhydride bond driven by GTP hydrolysis by CysN coupled to ATP hydrolysis by CysD. This is Sulfate adenylyltransferase subunit 1 from Salmonella dublin (strain CT_02021853).